A 431-amino-acid chain; its full sequence is V-type ATP synthase beta chain (431 aa).

This sequence belongs to the ATPase alpha/beta chains family.

Functionally, produces ATP from ADP in the presence of a proton gradient across the membrane. The V-type beta chain is a regulatory subunit. The polypeptide is V-type ATP synthase beta chain (Treponema denticola (strain ATCC 35405 / DSM 14222 / CIP 103919 / JCM 8153 / KCTC 15104)).